We begin with the raw amino-acid sequence, 86 residues long: Large ribosomal subunit protein bL31B (86 aa).

This sequence belongs to the bacterial ribosomal protein bL31 family. Type B subfamily. In terms of assembly, part of the 50S ribosomal subunit.

This chain is Large ribosomal subunit protein bL31B, found in Cupriavidus necator (strain ATCC 17699 / DSM 428 / KCTC 22496 / NCIMB 10442 / H16 / Stanier 337) (Ralstonia eutropha).